The primary structure comprises 700 residues: Myotubularin-related protein 11 (700 aa).

Residues 1–39 (MWWGGRGQSFNIAPQKEEPEMGLSGPKSNPGNRMPEPSS) are disordered. Residues 201–644 (LETLEDWETE…PQIRFWKRCY (444 aa)) form the Myotubularin phosphatase domain.

Belongs to the protein-tyrosine phosphatase family. Non-receptor class myotubularin subfamily.

The polypeptide is Myotubularin-related protein 11 (Mtmr11) (Mus musculus (Mouse)).